Here is a 694-residue protein sequence, read N- to C-terminus: Glycine--tRNA ligase beta subunit (694 aa).

It belongs to the class-II aminoacyl-tRNA synthetase family. In terms of assembly, tetramer of two alpha and two beta subunits.

The protein resides in the cytoplasm. It carries out the reaction tRNA(Gly) + glycine + ATP = glycyl-tRNA(Gly) + AMP + diphosphate. The polypeptide is Glycine--tRNA ligase beta subunit (Moorella thermoacetica (strain ATCC 39073 / JCM 9320)).